The following is a 518-amino-acid chain: Bifunctional purine biosynthesis protein PurH (518 aa).

Positions 1 to 146 constitute an MGS-like domain; the sequence is MGRMALLSTS…KNHAHVTVLV (146 aa).

This sequence belongs to the PurH family.

It carries out the reaction (6R)-10-formyltetrahydrofolate + 5-amino-1-(5-phospho-beta-D-ribosyl)imidazole-4-carboxamide = 5-formamido-1-(5-phospho-D-ribosyl)imidazole-4-carboxamide + (6S)-5,6,7,8-tetrahydrofolate. The catalysed reaction is IMP + H2O = 5-formamido-1-(5-phospho-D-ribosyl)imidazole-4-carboxamide. It participates in purine metabolism; IMP biosynthesis via de novo pathway; 5-formamido-1-(5-phospho-D-ribosyl)imidazole-4-carboxamide from 5-amino-1-(5-phospho-D-ribosyl)imidazole-4-carboxamide (10-formyl THF route): step 1/1. The protein operates within purine metabolism; IMP biosynthesis via de novo pathway; IMP from 5-formamido-1-(5-phospho-D-ribosyl)imidazole-4-carboxamide: step 1/1. This Thermosynechococcus vestitus (strain NIES-2133 / IAM M-273 / BP-1) protein is Bifunctional purine biosynthesis protein PurH.